The following is a 532-amino-acid chain: Cytochrome P450 monooxygenase criE (532 aa).

Residues 18-38 (VSPAALSWAVVAVYIGTFFWL) form a helical membrane-spanning segment. Cys441 contacts heme.

Belongs to the cytochrome P450 family. Heme serves as cofactor.

Its subcellular location is the membrane. The catalysed reaction is preechinulin + reduced [NADPH--hemoprotein reductase] + O2 = neoechinulin A + oxidized [NADPH--hemoprotein reductase] + 2 H2O + H(+). It participates in secondary metabolite biosynthesis. It functions in the pathway alkaloid biosynthesis. Its function is as follows. Cytochrome P450 monooxygenase; part of the gene cluster that mediates the biosynthesis of echinulin family alkaloid. The pathway begins with the biosynthesis of the cyclic dipeptide cyclo-L-Trp-L-Ala (cyclo-TA) by the NRPS criC via condensation of L-alanine and L-tryptophan. The prenyltransferase criA then catalyzes the first prenylation step, a reverse prenylation reaction at C2, to yield preechinulin. Preechinulin is the substrate of the cytochrome P450 monooxygenase criE that catalyzes the formation of the double bond between C10 and C11 to produce neoechulin A. The unique prenyltransferase criF functions as a competitive enzyme with criE for preechinulin metabolization and uses preechinulin for effective regiospecific prenylations. Preechinulin is prenylated by criF at C5 or C7. C7-prenylation leads to accumulation of tardioxopiperazine B without further modification by criF. In contrast, the C5-prenylated tardioxopiperazine A can be prenylated again by criF, predominantly at C7 to form echinulin or less frequently at C4 to give variecolorin L. CriF also accepts neoechilunin A to produce varlecolorin G (prenylation at C5) or isoechinulin A (prenylation at C7). CriF further converts isoechinulin A into dehydroechinulin. Moreover, a yet unidentified enzyme can also convert neoechilunin A into neoechilunin B by introducing a double bond between positions C14 and C17 and thus provides a further substrate to criF for C5 and C7 prenylation. The sequence is that of Cytochrome P450 monooxygenase criE from Aspergillus cristatus (Chinese Fuzhuan brick tea-fermentation fungus).